The primary structure comprises 223 residues: Phosphoribosylformylglycinamidine synthase subunit PurQ (223 aa).

Residues 2–223 form the Glutamine amidotransferase type-1 domain; the sequence is KIAVVVFPGS…KSLLKAGVQA (222 aa). The Nucleophile role is filled by C86. Active-site residues include H195 and E197.

Part of the FGAM synthase complex composed of 1 PurL, 1 PurQ and 2 PurS subunits.

It localises to the cytoplasm. The catalysed reaction is N(2)-formyl-N(1)-(5-phospho-beta-D-ribosyl)glycinamide + L-glutamine + ATP + H2O = 2-formamido-N(1)-(5-O-phospho-beta-D-ribosyl)acetamidine + L-glutamate + ADP + phosphate + H(+). It catalyses the reaction L-glutamine + H2O = L-glutamate + NH4(+). Its pathway is purine metabolism; IMP biosynthesis via de novo pathway; 5-amino-1-(5-phospho-D-ribosyl)imidazole from N(2)-formyl-N(1)-(5-phospho-D-ribosyl)glycinamide: step 1/2. Functionally, part of the phosphoribosylformylglycinamidine synthase complex involved in the purines biosynthetic pathway. Catalyzes the ATP-dependent conversion of formylglycinamide ribonucleotide (FGAR) and glutamine to yield formylglycinamidine ribonucleotide (FGAM) and glutamate. The FGAM synthase complex is composed of three subunits. PurQ produces an ammonia molecule by converting glutamine to glutamate. PurL transfers the ammonia molecule to FGAR to form FGAM in an ATP-dependent manner. PurS interacts with PurQ and PurL and is thought to assist in the transfer of the ammonia molecule from PurQ to PurL. This chain is Phosphoribosylformylglycinamidine synthase subunit PurQ, found in Lactobacillus acidophilus (strain ATCC 700396 / NCK56 / N2 / NCFM).